The primary structure comprises 264 residues: 3-methyl-2-oxobutanoate hydroxymethyltransferase (264 aa).

Mg(2+) contacts are provided by D45 and D84. Residues 45 to 46 (DS), D84, and K112 contribute to the 3-methyl-2-oxobutanoate site. E114 lines the Mg(2+) pocket. E181 acts as the Proton acceptor in catalysis.

It belongs to the PanB family. As to quaternary structure, homodecamer; pentamer of dimers. The cofactor is Mg(2+).

It is found in the cytoplasm. It catalyses the reaction 3-methyl-2-oxobutanoate + (6R)-5,10-methylene-5,6,7,8-tetrahydrofolate + H2O = 2-dehydropantoate + (6S)-5,6,7,8-tetrahydrofolate. It functions in the pathway cofactor biosynthesis; (R)-pantothenate biosynthesis; (R)-pantoate from 3-methyl-2-oxobutanoate: step 1/2. Its function is as follows. Catalyzes the reversible reaction in which hydroxymethyl group from 5,10-methylenetetrahydrofolate is transferred onto alpha-ketoisovalerate to form ketopantoate. This Escherichia coli O1:K1 / APEC protein is 3-methyl-2-oxobutanoate hydroxymethyltransferase.